The sequence spans 272 residues: Lyso-glycine lipid O-acyltransferase (272 aa).

This sequence belongs to the O-acyltransferase GlsA family.

It carries out the reaction a lyso-glycine lipid + a fatty acyl-[ACP] = a glycine lipid + holo-[ACP]. The catalysed reaction is N-[(3R)-3-hydroxyhexadecanoyl]-glycine + hexadecanoyl-[ACP] = N-[(3R)-3-(hexadecanoyloxy)hexadecanoyl]-glycine + holo-[ACP]. It functions in the pathway lipid metabolism. Is involved in the production of glycine lipids (GL), which are phosphorus-free membrane lipids important for fitness during growth of the human gut bacterium B.thetaiotaomicron in vivo and in vitro. Catalyzes the second step of GL biosynthesis, i.e. the O-acylation of the hydroxyl group of lyso-glycine lipids, resulting in the production of the mature diacylated glycine lipids. The protein is Lyso-glycine lipid O-acyltransferase of Bacteroides thetaiotaomicron (strain ATCC 29148 / DSM 2079 / JCM 5827 / CCUG 10774 / NCTC 10582 / VPI-5482 / E50).